Reading from the N-terminus, the 129-residue chain is Large ribosomal subunit protein bL20 (129 aa).

The protein belongs to the bacterial ribosomal protein bL20 family.

Its function is as follows. Binds directly to 23S ribosomal RNA and is necessary for the in vitro assembly process of the 50S ribosomal subunit. It is not involved in the protein synthesizing functions of that subunit. This is Large ribosomal subunit protein bL20 from Mycolicibacterium gilvum (strain PYR-GCK) (Mycobacterium gilvum (strain PYR-GCK)).